Reading from the N-terminus, the 1166-residue chain is ATP-dependent helicase/deoxyribonuclease subunit B (1166 aa).

The 285-residue stretch at 1 to 285 (MGAVFLSGRS…VRLEETKRHR (285 aa)) folds into the UvrD-like helicase ATP-binding domain. 8 to 15 (GRSGSGKT) provides a ligand contact to ATP. Residues 279-586 (EETKRHRHHP…KFALIPPALD (308 aa)) form the UvrD-like helicase C-terminal domain. [4Fe-4S] cluster is bound by residues Cys-801, Cys-1121, Cys-1124, and Cys-1130.

It belongs to the helicase family. AddB/RexB type 1 subfamily. As to quaternary structure, heterodimer of AddA and AddB. Mg(2+) is required as a cofactor. Requires [4Fe-4S] cluster as cofactor.

The heterodimer acts as both an ATP-dependent DNA helicase and an ATP-dependent, dual-direction single-stranded exonuclease. Recognizes the chi site generating a DNA molecule suitable for the initiation of homologous recombination. The AddB subunit has 5' -&gt; 3' nuclease activity but not helicase activity. The polypeptide is ATP-dependent helicase/deoxyribonuclease subunit B (Bacillus licheniformis (strain ATCC 14580 / DSM 13 / JCM 2505 / CCUG 7422 / NBRC 12200 / NCIMB 9375 / NCTC 10341 / NRRL NRS-1264 / Gibson 46)).